We begin with the raw amino-acid sequence, 1049 residues long: Retinoblastoma-like protein 1 (1049 aa).

Residues T332, T369, and T385 each carry the phosphothreonine modification. The tract at residues 385 to 584 (TPVASATQSV…WEALRASANK (200 aa)) is domain A. A pocket; binds T and E1A region spans residues 385-944 (TPVASATQSV…GRVKSFALKY (560 aa)). The tract at residues 585-779 (VPSCEEVIFP…TQDAPLTGIS (195 aa)) is spacer. Phosphoserine is present on residues S640, S650, S748, and S761. The domain B stretch occupies residues 780–944 (KPKRTGSLAL…GRVKSFALKY (165 aa)). Phosphoserine occurs at positions 959, 970, and 983. T992 is subject to Phosphothreonine. 2 positions are modified to phosphoserine: S1004 and S1022.

This sequence belongs to the retinoblastoma protein (RB) family. Component of the DREAM complex (also named LINC complex) at least composed of E2F4, E2F5, LIN9, LIN37, LIN52, LIN54, MYBL1, MYBL2, RBL1, RBL2, RBBP4, TFDP1 and TFDP2. The complex exists in quiescent cells where it represses cell cycle-dependent genes. It dissociates in S phase when LIN9, LIN37, LIN52 and LIN54 form a subcomplex that binds to MYBL2. Interacts with AATF. Interacts with KDM5A. Interacts with KMT5B and KMT5C. Interacts with USP4. Interacts with RBBP9. Post-translationally, cell-cycle arrest properties are inactivated by phosphorylation on Thr-332, Ser-640, Ser-959 and Ser-970 by CDK4.

It is found in the nucleus. In terms of biological role, key regulator of entry into cell division. Directly involved in heterochromatin formation by maintaining overall chromatin structure and, in particular, that of constitutive heterochromatin by stabilizing histone methylation. Recruits and targets histone methyltransferases KMT5B and KMT5C, leading to epigenetic transcriptional repression. Controls histone H4 'Lys-20' trimethylation. Probably acts as a transcription repressor by recruiting chromatin-modifying enzymes to promoters. Potent inhibitor of E2F-mediated trans-activation. May act as a tumor suppressor. The protein is Retinoblastoma-like protein 1 of Rattus norvegicus (Rat).